Consider the following 728-residue polypeptide: UvrABC system protein C (728 aa).

Positions 16–95 (DSPGVYRFRD…IKEYDPRFNV (80 aa)) constitute a GIY-YIG domain. In terms of domain architecture, UVR spans 208–243 (GTYLRRLERQMAEAAEEMEYERAARLRDDIGALKKA). Disordered regions lie at residues 473–535 (ADGE…GRPK) and 689–728 (VNTATGEIMDDDDGAPETTADAPGEPVSAGTPDERRGQER). Residues 487–505 (GDAAPNGDAAPNDGAAPDD) show a composition bias toward low complexity.

The protein belongs to the UvrC family. As to quaternary structure, interacts with UvrB in an incision complex.

The protein resides in the cytoplasm. Its function is as follows. The UvrABC repair system catalyzes the recognition and processing of DNA lesions. UvrC both incises the 5' and 3' sides of the lesion. The N-terminal half is responsible for the 3' incision and the C-terminal half is responsible for the 5' incision. In Streptomyces coelicolor (strain ATCC BAA-471 / A3(2) / M145), this protein is UvrABC system protein C.